The following is a 117-amino-acid chain: MQRFMMKSKIHRAIVTDANLNYQGSITIDKNLMELADILPNEKVQVLNINNGARFDTYAIEGERGSGTICINGAAARLCQVGDIIIIISYAIMDDEEAKNYKPKVIFVDENNKPVNM.

Residue Ser25 is the Schiff-base intermediate with substrate; via pyruvic acid of the active site. A Pyruvic acid (Ser) modification is found at Ser25. Residue Thr57 participates in substrate binding. Residue Tyr58 is the Proton donor of the active site. 73-75 (GAA) lines the substrate pocket.

It belongs to the PanD family. As to quaternary structure, heterooctamer of four alpha and four beta subunits. The cofactor is pyruvate. Is synthesized initially as an inactive proenzyme, which is activated by self-cleavage at a specific serine bond to produce a beta-subunit with a hydroxyl group at its C-terminus and an alpha-subunit with a pyruvoyl group at its N-terminus.

Its subcellular location is the cytoplasm. The catalysed reaction is L-aspartate + H(+) = beta-alanine + CO2. The protein operates within cofactor biosynthesis; (R)-pantothenate biosynthesis; beta-alanine from L-aspartate: step 1/1. Functionally, catalyzes the pyruvoyl-dependent decarboxylation of aspartate to produce beta-alanine. The sequence is that of Aspartate 1-decarboxylase from Thermoanaerobacter pseudethanolicus (strain ATCC 33223 / 39E) (Clostridium thermohydrosulfuricum).